The following is a 587-amino-acid chain: uncharacterized protein (587 aa).

Residues 1–21 (MANRLLIYGLILWVSIIGSFA) form the signal peptide. Over 22–541 (LDRNKTAQNA…LEKEVSFQRR (520 aa)) the chain is Lumenal. N-linked (GlcNAc...) asparagine glycosylation occurs at N25. Positions 44–108 (GSTTNVQKEH…RNPGDSSNSF (65 aa)) are disordered. Residues 63–90 (RTHDFRQASKVDIRQADIRENGERKEQD) show a composition bias toward basic and acidic residues. Residues 91-108 (ALTQPATPRNPGDSSNSF) show a composition bias toward polar residues. The SUN domain occupies 163–331 (NEWSEREENQ…SLIKVYGKSM (169 aa)). N378, N381, N408, N448, and N486 each carry an N-linked (GlcNAc...) asparagine glycan. Residues 542-562 (IVYASFFAFVGLISYLLITRE) form a helical membrane-spanning segment. Topologically, residues 563–587 (LYFEDFEESKNGAIEKADIVQQAIR) are cytoplasmic.

The protein belongs to the SLP1 family. In terms of assembly, interacts with EMP65.

It is found in the endoplasmic reticulum membrane. Functionally, may be involved in membrane protein folding. Required for localization of MPS3 to the nuclear envelope. This is an uncharacterized protein from Saccharomyces cerevisiae (strain ATCC 204508 / S288c) (Baker's yeast).